We begin with the raw amino-acid sequence, 218 residues long: Large ribosomal subunit protein uL3 (218 aa).

Belongs to the universal ribosomal protein uL3 family. In terms of assembly, part of the 50S ribosomal subunit. Forms a cluster with proteins L14 and L19.

Its function is as follows. One of the primary rRNA binding proteins, it binds directly near the 3'-end of the 23S rRNA, where it nucleates assembly of the 50S subunit. This chain is Large ribosomal subunit protein uL3, found in Rhodococcus jostii (strain RHA1).